The chain runs to 209 residues: Uracil phosphoribosyltransferase (209 aa).

5-phospho-alpha-D-ribose 1-diphosphate-binding positions include Arg-79, Arg-104, and 131-139; that span reads DPMLATGAS. Uracil is bound by residues Ile-194 and 199–201; that span reads GDA. Residue Asp-200 coordinates 5-phospho-alpha-D-ribose 1-diphosphate.

This sequence belongs to the UPRTase family. Requires Mg(2+) as cofactor.

It catalyses the reaction UMP + diphosphate = 5-phospho-alpha-D-ribose 1-diphosphate + uracil. It functions in the pathway pyrimidine metabolism; UMP biosynthesis via salvage pathway; UMP from uracil: step 1/1. With respect to regulation, allosterically activated by GTP. Catalyzes the conversion of uracil and 5-phospho-alpha-D-ribose 1-diphosphate (PRPP) to UMP and diphosphate. This Staphylococcus epidermidis (strain ATCC 35984 / DSM 28319 / BCRC 17069 / CCUG 31568 / BM 3577 / RP62A) protein is Uracil phosphoribosyltransferase.